The following is a 516-amino-acid chain: Myocyte-specific enhancer factor 2A homolog (516 aa).

The tract at residues 1–100 is interaction with hdac9; that stretch reads MGRKKIQITR…KGLNGCESPD (100 aa). In terms of domain architecture, MADS-box spans 3 to 57; the sequence is RKKIQITRIMDERNRQVTFTKRKFGLMKKAYELSVLCDCEIALIIFNSSNKLFQY. Residues 58–86 constitute a DNA-binding region (mef2-type); it reads ASTDMDKVLLKYTEYNEPHESRTNSDIVE. Residues 318 to 339 are disordered; it reads PSSKGMMPPLNTQRVTSSQGTQ. Polar residues predominate over residues 327–339; sequence LNTQRVTSSQGTQ. T343 carries the post-translational modification Phosphothreonine; by NLK. At S386 the chain carries Phosphoserine; by NLK. Polar residues predominate over residues 420–433; that stretch reads GSNLSINTNQNINI. Residues 420 to 516 form a disordered region; it reads GSNLSINTNQ…KRMRMDAWVT (97 aa). Residues 465–475 are compositionally biased toward low complexity; sequence DSLSSSSSSYD. Composition is skewed to basic and acidic residues over residues 476–486 and 497–516; these read GSDREDVRNDF and NNEDRDSPSVKRMRMDAWVT.

This sequence belongs to the MEF2 family. In terms of assembly, interacts with hdac9 and nlk2. Restricted to the somitic mesoderm of early embryos. Expressed in the head region of neurula stage embryos and in body muscle (myotomes) of the tadpole. Expressed in all tissues examined in the adult.

Its subcellular location is the nucleus. May regulate muscle-specific transcription in the embryo and may regulate transcription of a variety of cell types in the adult. Binds to the sequence 5'-CTA[TA]4TAR-3'. Acts downstream of nlk2 in anterior neural development, including eye formation. The chain is Myocyte-specific enhancer factor 2A homolog (mef2a) from Xenopus laevis (African clawed frog).